The following is a 322-amino-acid chain: 4-diphosphocytidyl-2-C-methyl-D-erythritol kinase (322 aa).

Lys-18 is an active-site residue. ATP is bound at residue 130-140 (PMGAGLGGGSS). The active site involves Asp-172.

The protein belongs to the GHMP kinase family. IspE subfamily.

It catalyses the reaction 4-CDP-2-C-methyl-D-erythritol + ATP = 4-CDP-2-C-methyl-D-erythritol 2-phosphate + ADP + H(+). Its pathway is isoprenoid biosynthesis; isopentenyl diphosphate biosynthesis via DXP pathway; isopentenyl diphosphate from 1-deoxy-D-xylulose 5-phosphate: step 3/6. In terms of biological role, catalyzes the phosphorylation of the position 2 hydroxy group of 4-diphosphocytidyl-2C-methyl-D-erythritol. In Psychrobacter arcticus (strain DSM 17307 / VKM B-2377 / 273-4), this protein is 4-diphosphocytidyl-2-C-methyl-D-erythritol kinase.